A 161-amino-acid polypeptide reads, in one-letter code: Ethylene-responsive transcription factor ERF070 (161 aa).

The interval 1 to 35 (MKRIIRISFTDAEATDSSSDEDTEERGGASQTRRR) is disordered. Positions 78-140 (KYRGVRQRPW…IGPHAPTNFG (63 aa)) form a DNA-binding region, AP2/ERF.

It belongs to the AP2/ERF transcription factor family. ERF subfamily.

Its subcellular location is the nucleus. In terms of biological role, probably acts as a transcriptional activator. Binds to the GCC-box pathogenesis-related promoter element. May be involved in the regulation of gene expression by stress factors and by components of stress signal transduction pathways. The chain is Ethylene-responsive transcription factor ERF070 (ERF070) from Arabidopsis thaliana (Mouse-ear cress).